Consider the following 418-residue polypeptide: Voltage-gated ClC-type chloride channel ClcB (418 aa).

The next 10 membrane-spanning stretches (helical) occupy residues 5-25 (LLIA…FRHA), 54-74 (LLTP…WQKF), 146-166 (LWIA…PLAG), 168-188 (LFIA…PVII), 222-242 (ALII…LTLM), 258-278 (WQLA…PAVW), 291-311 (APPL…AVLA), 316-336 (GAPG…GMLY), 352-372 (LLLG…APIM), and 380-400 (MTGE…ASVI).

It belongs to the chloride channel (TC 2.A.49) family. ClcB subfamily.

The protein resides in the cell inner membrane. Its function is as follows. Probably acts as an electrical shunt for an outwardly-directed proton pump that is linked to amino acid decarboxylation, as part of the extreme acid resistance (XAR) response. The sequence is that of Voltage-gated ClC-type chloride channel ClcB from Escherichia coli (strain SMS-3-5 / SECEC).